Consider the following 524-residue polypeptide: Chromosomal replication initiator protein DnaA (524 aa).

Residues M1–H73 form a domain I, interacts with DnaA modulators region. Positions H73–S187 are domain II. 3 stretches are compositionally biased toward polar residues: residues R86 to G95, A106 to Q126, and N153 to N165. Positions R86–K173 are disordered. The interval N188–A404 is domain III, AAA+ region. Residues G232, G234, K235, and T236 each contribute to the ATP site. A domain IV, binds dsDNA region spans residues H405–T524.

Belongs to the DnaA family. As to quaternary structure, oligomerizes as a right-handed, spiral filament on DNA at oriC.

The protein resides in the cytoplasm. Plays an essential role in the initiation and regulation of chromosomal replication. ATP-DnaA binds to the origin of replication (oriC) to initiate formation of the DNA replication initiation complex once per cell cycle. Binds the DnaA box (a 9 base pair repeat at the origin) and separates the double-stranded (ds)DNA. Forms a right-handed helical filament on oriC DNA; dsDNA binds to the exterior of the filament while single-stranded (ss)DNA is stabiized in the filament's interior. The ATP-DnaA-oriC complex binds and stabilizes one strand of the AT-rich DNA unwinding element (DUE), permitting loading of DNA polymerase. After initiation quickly degrades to an ADP-DnaA complex that is not apt for DNA replication. Binds acidic phospholipids. The polypeptide is Chromosomal replication initiator protein DnaA (Saccharophagus degradans (strain 2-40 / ATCC 43961 / DSM 17024)).